The primary structure comprises 103 residues: MYAVFQSGGKQHRVSEGQTVRLEKLDIATGEAVEFDLVLMVANGEEIKIGVPYVDGGKIKAEVVAHGRGEKVKIVKFRRRKHYRKQAGHRQWFTDVKITGISA.

It belongs to the bacterial ribosomal protein bL21 family. In terms of assembly, part of the 50S ribosomal subunit. Contacts protein L20.

Its function is as follows. This protein binds to 23S rRNA in the presence of protein L20. The protein is Large ribosomal subunit protein bL21 of Pectobacterium atrosepticum (strain SCRI 1043 / ATCC BAA-672) (Erwinia carotovora subsp. atroseptica).